The sequence spans 77 residues: U11-lycotoxin-Ls1a (77 aa).

The signal sequence occupies residues Met-1–Ala-20. The propeptide occupies Glu-21–Arg-26.

The protein belongs to the neurotoxin 19 (CSTX) family. 10 (U11-Lctx) subfamily. In terms of processing, contains 4 disulfide bonds. Expressed by the venom gland.

The protein localises to the secreted. This is U11-lycotoxin-Ls1a from Lycosa singoriensis (Wolf spider).